The primary structure comprises 1158 residues: MLRNGAQNGNINSESHESFGKAAKGFRIFSSFSSSQKLFQRRSSGSITHSPTALSSTTSLNENDGNHFRPASSLSFSPSSLSRKDSGPGDGLEVNKKNNFYRRSSSTDDFGISHARSRKEIQSLGRPHTRQSFSVSDVSNGSSYPNIRKNSVHVNAPMPSFPEGSTAVLLKHHSGSKSASAISNIAPSHSNSTSSRRPYIHPAFLSQVAVEFRKRLNIGDRVKDGLLYKDAFLGSEAVDVLMHIVRTTDRNLALLLGRALDSQKMFHDVTYSHRLRDSLKEVYQYRRIISPPPGLSSMDSNGSSIENNFLYTKRRANTSDSFDSVLSDSSTTPTISSSVQVNSLAFITSSLSAITKEPEAPETEYNPHGVFTLLTECYSSTCSRNRLCYSISCPRRLEQQARLHLKVQPVLSGGSTSITDKQEEDHRLWSENVPKQVVDQIDVREWKRQEIIFEVIYTERDFVRDLEYIRDFWIKPLSTSNVIPENNRQQFIRCVFHNIMQIHAVNSRLSNALNRTQTLQPVVNTIGDLFLDYVPKFEPFIKYGANQAIAKFEFEREKSTNRNFANYVHEVERLRESRKLELNGYLTKPTTRLARYPLLLSGVLKYTDKDNPDTENIPRVIEMIREFLTKLNYETGKTENRLSLLQLNEQLSCSPADRAKLTLFDPSRLLIFKGVVKLKASSYSNGDTENDIHMFLLDNFLLLCKIKIQMKRRVHKLHLRPLPLELLSISYIEDSPSRGSLPRRPSSALLTNPISITKSNPPPVKAYGLQLVFIGARGFSISLYLNTLIARDQWKQHIEKQQDIIRKRHLVFESRGICCQSWFTGNKLLCAVAYDAGRKLLFGTYKGLYISSRKSNNGSCLEPIFKLQLPNISQLDVIEEHNVLLLLAEKILYELPLDALDSVEQINSKSLRRVTGHVSFVKTGFCMQRILVCAVKSTVLNTTLRIYEADRALKNKKTQSLKKPFGNQATLKIFTEVQMPMEALSVHFLKTKLCVGSFKGFDIISLENAVFQSLLNPADTSFRFLEKREDIRPIAMFRLRGEFLLCYSDFAFFVNTNGWKSRQSWMINWEGQPQGCALCYPYILAFEPDFIEIRNAETAELVQIIMGQNIKLLTDGRGLISEGGEILYSTEPIPFSSGENPIVHSLILPPANAAGPAL.

The interval 42 to 141 (RSSGSITHSP…SFSVSDVSNG (100 aa)) is disordered. Residues 45–63 (GSITHSPTALSSTTSLNEN) are compositionally biased toward polar residues. Over residues 68–81 (FRPASSLSFSPSSL) the composition is skewed to low complexity. A compositionally biased stretch (polar residues) spans 97 to 108 (KNNFYRRSSSTD). A compositionally biased stretch (low complexity) spans 132–141 (SFSVSDVSNG). In terms of domain architecture, DH spans 447 to 634 (KRQEIIFEVI…REFLTKLNYE (188 aa)). Positions 670 to 805 (LIFKGVVKLK…QHIEKQQDII (136 aa)) constitute a PH domain. 2 positions are modified to phosphoserine: serine 746 and serine 747. Positions 825–1120 (GNKLLCAVAY…KLLTDGRGLI (296 aa)) constitute a CNH domain.

It is found in the cytoplasm. Its function is as follows. Stimulates the exchange of Rho1 and Rho5 GDP-bound form into GTP-bound form. Controls septum formation, cell wall synthesis and localization of F-actin patches. The protein is Rho1 guanine nucleotide exchange factor 2 (rgf2) of Schizosaccharomyces pombe (strain 972 / ATCC 24843) (Fission yeast).